The sequence spans 139 residues: Hydrogenase maturation factor HypA (139 aa).

Histidine 2 contributes to the Ni(2+) binding site. The Zn(2+) site is built by cysteine 73, cysteine 76, cysteine 110, and cysteine 113.

Belongs to the HypA/HybF family.

Functionally, involved in the maturation of [NiFe] hydrogenases. Required for nickel insertion into the metal center of the hydrogenase. The sequence is that of Hydrogenase maturation factor HypA from Pyrococcus furiosus (strain ATCC 43587 / DSM 3638 / JCM 8422 / Vc1).